We begin with the raw amino-acid sequence, 129 residues long: Small ribosomal subunit protein uS13 (129 aa).

Residues 92 to 114 (HKHNLPVRGQRTKTNARTRRGPR) show a composition bias toward basic residues. The disordered stretch occupies residues 92–129 (HKHNLPVRGQRTKTNARTRRGPRKTVAGRGQKRGATKK).

It belongs to the universal ribosomal protein uS13 family. Part of the 30S ribosomal subunit. Forms a loose heterodimer with protein S19. Forms two bridges to the 50S subunit in the 70S ribosome.

Its function is as follows. Located at the top of the head of the 30S subunit, it contacts several helices of the 16S rRNA. In the 70S ribosome it contacts the 23S rRNA (bridge B1a) and protein L5 of the 50S subunit (bridge B1b), connecting the 2 subunits; these bridges are implicated in subunit movement. Contacts the tRNAs in the A and P-sites. This Dehalococcoides mccartyi (strain ATCC BAA-2266 / KCTC 15142 / 195) (Dehalococcoides ethenogenes (strain 195)) protein is Small ribosomal subunit protein uS13.